A 368-amino-acid chain; its full sequence is Aspartate-semialdehyde dehydrogenase (368 aa).

Residues 10-13 (RGMV), 37-38 (TS), and Gln72 contribute to the NADP(+) site. Arg101 contributes to the phosphate binding site. The active-site Acyl-thioester intermediate is Cys134. NADP(+) is bound by residues 160-161 (SG) and Pro191. Glu239 contacts substrate. Lys242 is a binding site for phosphate. A substrate-binding site is contributed by Arg266. Catalysis depends on His273, which acts as the Proton acceptor. An NADP(+)-binding site is contributed by Gln349.

It belongs to the aspartate-semialdehyde dehydrogenase family. In terms of assembly, homodimer.

The enzyme catalyses L-aspartate 4-semialdehyde + phosphate + NADP(+) = 4-phospho-L-aspartate + NADPH + H(+). The protein operates within amino-acid biosynthesis; L-lysine biosynthesis via DAP pathway; (S)-tetrahydrodipicolinate from L-aspartate: step 2/4. It participates in amino-acid biosynthesis; L-methionine biosynthesis via de novo pathway; L-homoserine from L-aspartate: step 2/3. Its pathway is amino-acid biosynthesis; L-threonine biosynthesis; L-threonine from L-aspartate: step 2/5. Functionally, catalyzes the NADPH-dependent formation of L-aspartate-semialdehyde (L-ASA) by the reductive dephosphorylation of L-aspartyl-4-phosphate. The chain is Aspartate-semialdehyde dehydrogenase from Azotobacter vinelandii.